The sequence spans 360 residues: Peptide chain release factor 1 (360 aa).

Q235 carries the N5-methylglutamine modification. A disordered region spans residues 285-314 (KRQQAEASTRRNLLGSGDRSDRNRTYNFPQ).

It belongs to the prokaryotic/mitochondrial release factor family. In terms of processing, methylated by PrmC. Methylation increases the termination efficiency of RF1.

The protein resides in the cytoplasm. Its function is as follows. Peptide chain release factor 1 directs the termination of translation in response to the peptide chain termination codons UAG and UAA. The polypeptide is Peptide chain release factor 1 (Klebsiella pneumoniae subsp. pneumoniae (strain ATCC 700721 / MGH 78578)).